A 129-amino-acid chain; its full sequence is Small ribosomal subunit protein uS11 (129 aa).

Belongs to the universal ribosomal protein uS11 family. Part of the 30S ribosomal subunit. Interacts with proteins S7 and S18. Binds to IF-3.

Functionally, located on the platform of the 30S subunit, it bridges several disparate RNA helices of the 16S rRNA. Forms part of the Shine-Dalgarno cleft in the 70S ribosome. This Lysinibacillus sphaericus (strain C3-41) protein is Small ribosomal subunit protein uS11.